The following is a 404-amino-acid chain: Acetate kinase (404 aa).

Position 9 (Asn-9) interacts with Mg(2+). Lys-16 contributes to the ATP binding site. Substrate is bound at residue Arg-100. Residue Asp-157 is the Proton donor/acceptor of the active site. ATP-binding positions include 215–219, 290–292, and 335–339; these read HLGNG, DMR, and GIGEN. Glu-386 contributes to the Mg(2+) binding site.

The protein belongs to the acetokinase family. In terms of assembly, homodimer. It depends on Mg(2+) as a cofactor. Mn(2+) is required as a cofactor.

The protein resides in the cytoplasm. It carries out the reaction acetate + ATP = acetyl phosphate + ADP. It functions in the pathway metabolic intermediate biosynthesis; acetyl-CoA biosynthesis; acetyl-CoA from acetate: step 1/2. Its function is as follows. Catalyzes the formation of acetyl phosphate from acetate and ATP. Can also catalyze the reverse reaction. This Methylocella silvestris (strain DSM 15510 / CIP 108128 / LMG 27833 / NCIMB 13906 / BL2) protein is Acetate kinase.